The primary structure comprises 435 residues: Trigger factor (435 aa).

The region spanning 163–248 (GDFVTFDFKG…VKEIKVKELP (86 aa)) is the PPIase FKBP-type domain.

Belongs to the FKBP-type PPIase family. Tig subfamily.

The protein resides in the cytoplasm. The enzyme catalyses [protein]-peptidylproline (omega=180) = [protein]-peptidylproline (omega=0). Its function is as follows. Involved in protein export. Acts as a chaperone by maintaining the newly synthesized protein in an open conformation. Functions as a peptidyl-prolyl cis-trans isomerase. This chain is Trigger factor, found in Geobacter sp. (strain M21).